Reading from the N-terminus, the 190-residue chain is MGKSKKQKEEMLAGIKQNLSESQLALVINYQGLSVAEITDLRRRLIPTGSICSIAKNTLMGIAVKEDSNWQPMEDLLAGSNAFLFLKNDIGGAIKAYQDFQKATKKTEFKGGVMEGRLLDKDQVKAIADLPSKEELLAQVAGAINNIATKLAISLDAVPTQLATGINEVPASVNRAIKAISDKEQQGDAA.

This sequence belongs to the universal ribosomal protein uL10 family. As to quaternary structure, part of the ribosomal stalk of the 50S ribosomal subunit. The N-terminus interacts with L11 and the large rRNA to form the base of the stalk. The C-terminus forms an elongated spine to which L12 dimers bind in a sequential fashion forming a multimeric L10(L12)X complex.

Functionally, forms part of the ribosomal stalk, playing a central role in the interaction of the ribosome with GTP-bound translation factors. This Trichodesmium erythraeum (strain IMS101) protein is Large ribosomal subunit protein uL10.